Consider the following 330-residue polypeptide: Carbonic anhydrase 1 (330 aa).

The chloroplast transit peptide-like stretch occupies residues Met-1–Ala-109.

This sequence belongs to the beta-class carbonic anhydrase family. As to quaternary structure, homohexamer.

Its subcellular location is the cytoplasm. The catalysed reaction is hydrogencarbonate + H(+) = CO2 + H2O. Functionally, reversible hydration of carbon dioxide. The protein is Carbonic anhydrase 1 of Flaveria linearis (Narrowleaf yellowtops).